The chain runs to 122 residues: Large ribosomal subunit protein uL14 (122 aa).

The protein belongs to the universal ribosomal protein uL14 family. In terms of assembly, part of the 50S ribosomal subunit. Forms a cluster with proteins L3 and L19. In the 70S ribosome, L14 and L19 interact and together make contacts with the 16S rRNA in bridges B5 and B8.

Functionally, binds to 23S rRNA. Forms part of two intersubunit bridges in the 70S ribosome. The polypeptide is Large ribosomal subunit protein uL14 (Heliobacterium modesticaldum (strain ATCC 51547 / Ice1)).